The primary structure comprises 335 residues: Cell division protein ZipA (335 aa).

Over 1–6 the chain is Periplasmic; that stretch reads MENLQL. A helical transmembrane segment spans residues 7 to 27; that stretch reads VLFVLGAVAIIAVLVHGFWSI. Residues 28–335 lie on the Cytoplasmic side of the membrane; it reads RRQQPKSLKE…SYLQRIRAQM (308 aa). Disordered stretches follow at residues 37–128 and 163–185; these read ESPM…NEEV and RPAP…VSVE. Residues 170-185 are compositionally biased toward low complexity; sequence APQSVAPASVEPVSVE.

The protein belongs to the ZipA family. Interacts with FtsZ via their C-terminal domains.

The protein resides in the cell inner membrane. In terms of biological role, essential cell division protein that stabilizes the FtsZ protofilaments by cross-linking them and that serves as a cytoplasmic membrane anchor for the Z ring. Also required for the recruitment to the septal ring of downstream cell division proteins. The protein is Cell division protein ZipA of Shewanella loihica (strain ATCC BAA-1088 / PV-4).